The sequence spans 278 residues: Alpha-tocopherol transfer protein (278 aa).

Residues 88–253 (RPRSILGLLK…EYGGKEFSME (166 aa)) enclose the CRAL-TRIO domain. Residue D185 participates in a 1,2-diacyl-sn-glycero-3-phospho-(1D-myo-inositol-3,4-bisphosphate) binding. F187 is a binding site for (+)-alpha-tocopherol. 190–192 (KVR) contributes to the a 1,2-diacyl-sn-glycero-3-phospho-(1D-myo-inositol-3,4-bisphosphate) binding site. 208–211 (SMIK) lines the a 1,2-diacyl-sn-glycero-3-phospho-(1D-myo-inositol-4,5-bisphosphate) pocket. The a 1,2-diacyl-sn-glycero-3-phospho-(1D-myo-inositol-3,4-bisphosphate) site is built by K217 and R221.

Monomer and homotetramer. Phosphatidylinositol 4,5-bisphosphate binding induces the formation of homotetramers. Phosphatidylinositol 3,4-bisphosphate is less efficient in inducing tetramerization.

The protein localises to the cytoplasm. Binds (+)-alpha-tocopherol, enhances its transfer between separate membranes, and stimulates its release from liver cells. Binds both phosphatidylinositol 3,4-bisphosphate and phosphatidylinositol 4,5-bisphosphate; the resulting conformation change is important for the release of the bound alpha-tocopherol. In Mus musculus (Mouse), this protein is Alpha-tocopherol transfer protein (Ttpa).